The primary structure comprises 73 residues: Ferredoxin-thioredoxin reductase, variable chain (73 aa).

The segment at 43-46 (NGKP) is interaction with ferredoxin.

This sequence belongs to the ferredoxin thioredoxin reductase alpha subunit family. As to quaternary structure, heterodimer of subunit A (variable subunit) and subunit B (catalytic subunit). Heterodimeric FTR forms a complex with ferredoxin and thioredoxin.

Variable subunit of the ferredoxin-thioredoxin reductase (FTR), which catalyzes the two-electron reduction of thioredoxins by the electrons provided by reduced ferredoxin. This Synechococcus sp. (strain ATCC 27144 / PCC 6301 / SAUG 1402/1) (Anacystis nidulans) protein is Ferredoxin-thioredoxin reductase, variable chain (ftrV).